A 560-amino-acid polypeptide reads, in one-letter code: Muellerian-inhibiting factor (560 aa).

The signal sequence occupies residues 1–24 (MRDLPLTSLALVLSALGALLGTEA). A propeptide spanning residues 25–451 (LRAEEPAVGT…DPRGPGRAQR (427 aa)) is cleaved from the precursor. N-linked (GlcNAc...) asparagine glycosylation occurs at asparagine 64. The segment at 259 to 287 (PLPAHGQLDTVPFPPPRPSAELEESPPSA) is disordered. An N-linked (GlcNAc...) asparagine glycan is attached at asparagine 329. 3 disulfides stabilise this stretch: cysteine 462/cysteine 526, cysteine 488/cysteine 557, and cysteine 492/cysteine 559.

Belongs to the TGF-beta family. In terms of assembly, homodimer; disulfide-linked. Post-translationally, preproprotein is proteolytically processed to generate N- and C-terminal cleavage products that homodimerize and associate to form a biologically active non-covalent complex. Binding of the non-covalent complex to AMHR2 induces dissociation of the pro-region from the mature C-terminal dimer. The N-terminal portion of the protein, despite having no intrinsic activity, has the role of amplifying the activity of the C-terminus. As to expression, in ovaries, AMH is detected in granulosa cells of early growing follicles.

It is found in the secreted. Plays an important role in several reproductive functions. Induces Muellerian duct regression during male fetal sexual differentiation. Also plays a role in Leydig cell differentiation and function. In female acts as a negative regulator of the primordial to primary follicle transition and decreases FSH sensitivity of growing follicles. AMH signals by binding to a specific type-II receptor, AMHR2, that heterodimerizes with type-I receptors (ACVR1 and BMPR1A), and recruiting SMAD proteins that are translocated to the nucleus to regulate target gene expression. This chain is Muellerian-inhibiting factor, found in Homo sapiens (Human).